Reading from the N-terminus, the 163-residue chain is Lipoprotein signal peptidase (163 aa).

Helical transmembrane passes span 9 to 29, 42 to 62, 67 to 87, and 93 to 113; these read AWPW…SKYL, ILPF…SFLG, WQII…ILWL, and SEIM…GNFI. Active-site residues include D123 and D141. Residues 137–157 traverse the membrane as a helical segment; sequence FNVADSAICVGVFLLIVHMLL.

This sequence belongs to the peptidase A8 family.

The protein localises to the cell inner membrane. It catalyses the reaction Release of signal peptides from bacterial membrane prolipoproteins. Hydrolyzes -Xaa-Yaa-Zaa-|-(S,diacylglyceryl)Cys-, in which Xaa is hydrophobic (preferably Leu), and Yaa (Ala or Ser) and Zaa (Gly or Ala) have small, neutral side chains.. The protein operates within protein modification; lipoprotein biosynthesis (signal peptide cleavage). Its function is as follows. This protein specifically catalyzes the removal of signal peptides from prolipoproteins. The polypeptide is Lipoprotein signal peptidase (Coxiella burnetii (strain RSA 493 / Nine Mile phase I)).